Here is a 266-residue protein sequence, read N- to C-terminus: Glucosamine-6-phosphate deaminase (266 aa).

Aspartate 72 (proton acceptor; for enolization step) is an active-site residue. The For ring-opening step role is filled by aspartate 141. The active-site Proton acceptor; for ring-opening step is histidine 143. Glutamate 148 acts as the For ring-opening step in catalysis.

The protein belongs to the glucosamine/galactosamine-6-phosphate isomerase family. NagB subfamily. In terms of assembly, homohexamer.

It carries out the reaction alpha-D-glucosamine 6-phosphate + H2O = beta-D-fructose 6-phosphate + NH4(+). It participates in amino-sugar metabolism; N-acetylneuraminate degradation; D-fructose 6-phosphate from N-acetylneuraminate: step 5/5. Allosterically activated by N-acetylglucosamine 6-phosphate (GlcNAc6P). In terms of biological role, catalyzes the reversible isomerization-deamination of glucosamine 6-phosphate (GlcN6P) to form fructose 6-phosphate (Fru6P) and ammonium ion. The sequence is that of Glucosamine-6-phosphate deaminase from Cronobacter sakazakii (strain ATCC BAA-894) (Enterobacter sakazakii).